Reading from the N-terminus, the 250-residue chain is Leucyl/phenylalanyl-tRNA--protein transferase (250 aa).

It belongs to the L/F-transferase family.

It is found in the cytoplasm. The catalysed reaction is N-terminal L-lysyl-[protein] + L-leucyl-tRNA(Leu) = N-terminal L-leucyl-L-lysyl-[protein] + tRNA(Leu) + H(+). It catalyses the reaction N-terminal L-arginyl-[protein] + L-leucyl-tRNA(Leu) = N-terminal L-leucyl-L-arginyl-[protein] + tRNA(Leu) + H(+). The enzyme catalyses L-phenylalanyl-tRNA(Phe) + an N-terminal L-alpha-aminoacyl-[protein] = an N-terminal L-phenylalanyl-L-alpha-aminoacyl-[protein] + tRNA(Phe). Its function is as follows. Functions in the N-end rule pathway of protein degradation where it conjugates Leu, Phe and, less efficiently, Met from aminoacyl-tRNAs to the N-termini of proteins containing an N-terminal arginine or lysine. This is Leucyl/phenylalanyl-tRNA--protein transferase from Cupriavidus necator (strain ATCC 17699 / DSM 428 / KCTC 22496 / NCIMB 10442 / H16 / Stanier 337) (Ralstonia eutropha).